A 461-amino-acid polypeptide reads, in one-letter code: Cysteine--tRNA ligase (461 aa).

C28 is a binding site for Zn(2+). Positions 30-40 match the 'HIGH' region motif; it reads VTIYDLCHIGH. Zn(2+)-binding residues include C209, H234, and E238. The 'KMSKS' region motif lies at 266-270; that stretch reads KMSKS. Residue K269 coordinates ATP.

It belongs to the class-I aminoacyl-tRNA synthetase family. In terms of assembly, monomer. It depends on Zn(2+) as a cofactor.

It localises to the cytoplasm. The catalysed reaction is tRNA(Cys) + L-cysteine + ATP = L-cysteinyl-tRNA(Cys) + AMP + diphosphate. This chain is Cysteine--tRNA ligase, found in Edwardsiella ictaluri (strain 93-146).